The primary structure comprises 362 residues: Ribosomal RNA large subunit methyltransferase M (362 aa).

Residues Ser-187, 220–223 (CPGG), Asp-239, Asp-259, and Asp-276 contribute to the S-adenosyl-L-methionine site. Lys-305 functions as the Proton acceptor in the catalytic mechanism.

The protein belongs to the class I-like SAM-binding methyltransferase superfamily. RNA methyltransferase RlmE family. RlmM subfamily. In terms of assembly, monomer.

It is found in the cytoplasm. The enzyme catalyses cytidine(2498) in 23S rRNA + S-adenosyl-L-methionine = 2'-O-methylcytidine(2498) in 23S rRNA + S-adenosyl-L-homocysteine + H(+). In terms of biological role, catalyzes the 2'-O-methylation at nucleotide C2498 in 23S rRNA. This Shewanella frigidimarina (strain NCIMB 400) protein is Ribosomal RNA large subunit methyltransferase M.